A 387-amino-acid chain; its full sequence is Anhydro-N-acetylmuramic acid kinase (387 aa).

17-24 (GTSMDGVD) provides a ligand contact to ATP.

This sequence belongs to the anhydro-N-acetylmuramic acid kinase family.

The enzyme catalyses 1,6-anhydro-N-acetyl-beta-muramate + ATP + H2O = N-acetyl-D-muramate 6-phosphate + ADP + H(+). It participates in amino-sugar metabolism; 1,6-anhydro-N-acetylmuramate degradation. The protein operates within cell wall biogenesis; peptidoglycan recycling. Catalyzes the specific phosphorylation of 1,6-anhydro-N-acetylmuramic acid (anhMurNAc) with the simultaneous cleavage of the 1,6-anhydro ring, generating MurNAc-6-P. Is required for the utilization of anhMurNAc either imported from the medium or derived from its own cell wall murein, and thus plays a role in cell wall recycling. This is Anhydro-N-acetylmuramic acid kinase from Burkholderia mallei (strain ATCC 23344).